The following is a 389-amino-acid chain: Succinate--CoA ligase [ADP-forming] subunit beta (389 aa).

Residues R9 to K236 enclose the ATP-grasp domain. ATP-binding positions include K45, G52–G54, A94, and E99. Mg(2+)-binding residues include N191 and D205. Residues N256 and G318–T320 each bind substrate.

Belongs to the succinate/malate CoA ligase beta subunit family. In terms of assembly, heterotetramer of two alpha and two beta subunits. The cofactor is Mg(2+).

It catalyses the reaction succinate + ATP + CoA = succinyl-CoA + ADP + phosphate. The enzyme catalyses GTP + succinate + CoA = succinyl-CoA + GDP + phosphate. It functions in the pathway carbohydrate metabolism; tricarboxylic acid cycle; succinate from succinyl-CoA (ligase route): step 1/1. Its function is as follows. Succinyl-CoA synthetase functions in the citric acid cycle (TCA), coupling the hydrolysis of succinyl-CoA to the synthesis of either ATP or GTP and thus represents the only step of substrate-level phosphorylation in the TCA. The beta subunit provides nucleotide specificity of the enzyme and binds the substrate succinate, while the binding sites for coenzyme A and phosphate are found in the alpha subunit. The sequence is that of Succinate--CoA ligase [ADP-forming] subunit beta from Kocuria rhizophila (strain ATCC 9341 / DSM 348 / NBRC 103217 / DC2201).